The sequence spans 376 residues: Hydroxylysine kinase (376 aa).

The active-site Proton acceptor is the Asp-229.

It belongs to the aminoglycoside phosphotransferase family.

Its subcellular location is the cytoplasm. It catalyses the reaction (5R)-5-hydroxy-L-lysine + GTP = (5R)-5-phosphooxy-L-lysine + GDP + H(+). Catalyzes the GTP-dependent phosphorylation of 5-hydroxy-L-lysine. This is Hydroxylysine kinase (Hykk) from Mus musculus (Mouse).